A 217-amino-acid polypeptide reads, in one-letter code: Enolase-phosphatase E1 (217 aa).

2 residues coordinate Mg(2+): aspartate 9 and glutamate 11. Residues 112–113 and lysine 151 contribute to the substrate site; that span reads SS. Aspartate 176 serves as a coordination point for Mg(2+).

This sequence belongs to the HAD-like hydrolase superfamily. MasA/MtnC family. In terms of assembly, monomer. It depends on Mg(2+) as a cofactor.

It is found in the cytoplasm. The protein localises to the nucleus. The enzyme catalyses 5-methylsulfanyl-2,3-dioxopentyl phosphate + H2O = 1,2-dihydroxy-5-(methylsulfanyl)pent-1-en-3-one + phosphate. It participates in amino-acid biosynthesis; L-methionine biosynthesis via salvage pathway; L-methionine from S-methyl-5-thio-alpha-D-ribose 1-phosphate: step 3/6. Its pathway is amino-acid biosynthesis; L-methionine biosynthesis via salvage pathway; L-methionine from S-methyl-5-thio-alpha-D-ribose 1-phosphate: step 4/6. Functionally, bifunctional enzyme that catalyzes the enolization of 2,3-diketo-5-methylthiopentyl-1-phosphate (DK-MTP-1-P) into the intermediate 2-hydroxy-3-keto-5-methylthiopentenyl-1-phosphate (HK-MTPenyl-1-P), which is then dephosphorylated to form the acireductone 1,2-dihydroxy-3-keto-5-methylthiopentene (DHK-MTPene). The polypeptide is Enolase-phosphatase E1 (Lachancea thermotolerans (strain ATCC 56472 / CBS 6340 / NRRL Y-8284) (Yeast)).